The following is an 81-amino-acid chain: Bursicon (81 aa).

Heterodimer of burs and pburs. In terms of tissue distribution, central nervous system. Coexpressed with CCAP in most CCAP-specific neurons. Coexpressed with pburs in the large bilateral lateral neurosecretory neurons of the first three unfused abdominal ganglia and in all anterior bilateral cell pairs in the thoracic ganglia.

It is found in the secreted. Functionally, final heterodimeric neurohormone released at the end of the molting cycle, involved in the sclerotization (tanning) of the insect cuticle, melanization and wing spreading. The polypeptide is Bursicon (burs) (Periplaneta americana (American cockroach)).